A 275-amino-acid polypeptide reads, in one-letter code: Release factor glutamine methyltransferase (275 aa).

Residues 114-118, aspartate 137, tryptophan 165, and asparagine 180 each bind S-adenosyl-L-methionine; that span reads GTGSG. 180 to 183 contacts substrate; it reads NPPY.

This sequence belongs to the protein N5-glutamine methyltransferase family. PrmC subfamily.

The catalysed reaction is L-glutaminyl-[peptide chain release factor] + S-adenosyl-L-methionine = N(5)-methyl-L-glutaminyl-[peptide chain release factor] + S-adenosyl-L-homocysteine + H(+). Methylates the class 1 translation termination release factors RF1/PrfA and RF2/PrfB on the glutamine residue of the universally conserved GGQ motif. The polypeptide is Release factor glutamine methyltransferase (Xylella fastidiosa (strain 9a5c)).